Reading from the N-terminus, the 303-residue chain is Siderophore enterobactin esterase (303 aa).

The protein belongs to the esterase D family. Homodimer.

It catalyses the reaction enterobactin + 3 H2O = 3 N-(2,3-dihydroxybenzoyl)-L-serine + 2 H(+). In terms of biological role, displays specific enterobactin (ENB) esterase activity required for intracellular release of iron. Enterobactin is a xenosiderophore that is selectively produced by Gram-negative Enterobacteriaceae. The affinity for enterobactin is quite high, potentially due to the low natural abundance of this xenosiderophore in fungal habitats. Does not hydrolyze triacetylfusarinine C (TAFC). The chain is Siderophore enterobactin esterase from Emericella nidulans (strain FGSC A4 / ATCC 38163 / CBS 112.46 / NRRL 194 / M139) (Aspergillus nidulans).